A 151-amino-acid chain; its full sequence is MKQIDLKILDGRIGNEFPLPAYATEGSAGLDLRALTESALTVAPGQTVLIPTGISIYIADPNLAAVILPRSGLGHKNGIVLGNLVGLIDSDYQGPLMVSLWNRSDKPFTVEVGDRIAQLVFVPVVQARFNIVNDFAQTERGEGGFGHSGKQ.

Substrate-binding positions include 70-72 (RSG), N83, 87-89 (LID), and M97.

This sequence belongs to the dUTPase family. Requires Mg(2+) as cofactor.

It catalyses the reaction dUTP + H2O = dUMP + diphosphate + H(+). It participates in pyrimidine metabolism; dUMP biosynthesis; dUMP from dCTP (dUTP route): step 2/2. Its function is as follows. This enzyme is involved in nucleotide metabolism: it produces dUMP, the immediate precursor of thymidine nucleotides and it decreases the intracellular concentration of dUTP so that uracil cannot be incorporated into DNA. The protein is Deoxyuridine 5'-triphosphate nucleotidohydrolase of Actinobacillus pleuropneumoniae serotype 5b (strain L20).